The sequence spans 216 residues: Probable GTP-binding protein EngB (216 aa).

The region spanning 37 to 214 (DGLEVAFAGR…RAAMIRLLDE (178 aa)) is the EngB-type G domain. Residues 45–52 (GRSNVGKS), 72–76 (GRTQE), 92–95 (DMPG), 159–162 (TKAD), and 193–195 (TSS) each bind GTP. 2 residues coordinate Mg(2+): Ser-52 and Thr-74.

The protein belongs to the TRAFAC class TrmE-Era-EngA-EngB-Septin-like GTPase superfamily. EngB GTPase family. Mg(2+) is required as a cofactor.

Its function is as follows. Necessary for normal cell division and for the maintenance of normal septation. The protein is Probable GTP-binding protein EngB of Rhodopseudomonas palustris (strain HaA2).